A 673-amino-acid chain; its full sequence is DNA ligase (673 aa).

NAD(+) is bound by residues 32 to 36 (DHVYD), 81 to 82 (SL), and glutamate 111. Lysine 113 (N6-AMP-lysine intermediate) is an active-site residue. NAD(+)-binding residues include arginine 134, glutamate 171, lysine 286, and lysine 310. Zn(2+) is bound by residues cysteine 404, cysteine 407, cysteine 422, and cysteine 428. Positions 595–673 (NIIDEYKNKT…NEFWKKDNNF (79 aa)) constitute a BRCT domain.

It belongs to the NAD-dependent DNA ligase family. LigA subfamily. Requires Mg(2+) as cofactor. It depends on Mn(2+) as a cofactor.

It carries out the reaction NAD(+) + (deoxyribonucleotide)n-3'-hydroxyl + 5'-phospho-(deoxyribonucleotide)m = (deoxyribonucleotide)n+m + AMP + beta-nicotinamide D-nucleotide.. Functionally, DNA ligase that catalyzes the formation of phosphodiester linkages between 5'-phosphoryl and 3'-hydroxyl groups in double-stranded DNA using NAD as a coenzyme and as the energy source for the reaction. It is essential for DNA replication and repair of damaged DNA. This Ureaplasma parvum serovar 3 (strain ATCC 27815 / 27 / NCTC 11736) protein is DNA ligase.